Reading from the N-terminus, the 303-residue chain is Probable 5-dehydro-4-deoxyglucarate dehydratase (303 aa).

It belongs to the DapA family.

It catalyses the reaction 5-dehydro-4-deoxy-D-glucarate + H(+) = 2,5-dioxopentanoate + CO2 + H2O. The protein operates within carbohydrate acid metabolism; D-glucarate degradation; 2,5-dioxopentanoate from D-glucarate: step 2/2. In Agrobacterium fabrum (strain C58 / ATCC 33970) (Agrobacterium tumefaciens (strain C58)), this protein is Probable 5-dehydro-4-deoxyglucarate dehydratase.